A 424-amino-acid chain; its full sequence is CAAX prenyl protease 1 homolog (424 aa).

The next 5 membrane-spanning stretches (helical) occupy residues 3 to 23 (IPFM…ETYL), 67 to 87 (EFVT…PWFW), 109 to 129 (LSFL…FSLY), 155 to 175 (GTFL…FIVQ), and 185 to 205 (LWAF…VLIA). Residue H284 coordinates Zn(2+). The active site involves E285. H288 contributes to the Zn(2+) binding site. A run of 2 helical transmembrane segments spans residues 295-315 (TYSF…YTLV) and 332-352 (VLIG…LVSF). E362 is a binding site for Zn(2+). The active-site Proton donor is D366.

It belongs to the peptidase M48A family. The cofactor is Zn(2+). In terms of tissue distribution, expressed in leaves, stems and flowers.

The protein resides in the endoplasmic reticulum membrane. The catalysed reaction is Hydrolyzes the peptide bond -P2-(S-farnesyl or geranylgeranyl)C-P1'-P2'-P3'-COOH where P1' and P2' are amino acids with aliphatic side chains and P3' is any C-terminal residue.. Its function is as follows. Proteolytically removes the C-terminal three residues of farnesylated proteins. The substrate specificity is only partially overlapping with that of FACE2. The sequence is that of CAAX prenyl protease 1 homolog (FACE1) from Arabidopsis thaliana (Mouse-ear cress).